Reading from the N-terminus, the 111-residue chain is MNWVLVFIAGLLEVVWASSLKHADSLLDWIIIFILIAVSFILLIRSYQKIPMAAAYTVFVGIGTVGTYLTGIVLGESFSAAQMFFLALLLAGILGMKLFTKESKSQPGGEK.

Transmembrane regions (helical) follow at residues 3-23, 24-44, 54-74, and 80-100; these read WVLV…LKHA, DSLL…ILLI, AAYT…GIVL, and AAQM…KLFT.

This sequence belongs to the drug/metabolite transporter (DMT) superfamily. Small multidrug resistance (SMR) (TC 2.A.7.1) family.

It is found in the cell membrane. This is an uncharacterized protein from Bacillus subtilis (strain 168).